Reading from the N-terminus, the 910-residue chain is Protein translocase subunit SecA (910 aa).

ATP is bound by residues Gln89, 107–111 (GEGKT), and Asp502. Zn(2+) is bound by residues Cys894, Cys896, Cys905, and His906.

Belongs to the SecA family. As to quaternary structure, monomer and homodimer. Part of the essential Sec protein translocation apparatus which comprises SecA, SecYEG and auxiliary proteins SecDF-YajC and YidC. It depends on Zn(2+) as a cofactor.

The protein resides in the cell inner membrane. The protein localises to the cytoplasm. It catalyses the reaction ATP + H2O + cellular proteinSide 1 = ADP + phosphate + cellular proteinSide 2.. Part of the Sec protein translocase complex. Interacts with the SecYEG preprotein conducting channel. Has a central role in coupling the hydrolysis of ATP to the transfer of proteins into and across the cell membrane, serving both as a receptor for the preprotein-SecB complex and as an ATP-driven molecular motor driving the stepwise translocation of polypeptide chains across the membrane. In Chelativorans sp. (strain BNC1), this protein is Protein translocase subunit SecA.